The following is a 501-amino-acid chain: Endoglucanase 1 (501 aa).

A signal peptide spans Met1–Ser29. The active-site Nucleophile is the Asp96. Residues His422, Asp473, and Glu482 contribute to the active site.

It belongs to the glycosyl hydrolase 9 (cellulase E) family.

It is found in the secreted. The catalysed reaction is Endohydrolysis of (1-&gt;4)-beta-D-glucosidic linkages in cellulose, lichenin and cereal beta-D-glucans.. In Arabidopsis thaliana (Mouse-ear cress), this protein is Endoglucanase 1 (CEL2).